A 173-amino-acid chain; its full sequence is T-cell surface glycoprotein CD3 delta chain (173 aa).

The signal sequence occupies residues 1–21; that stretch reads MEHSGILASLILIAVLPQGSP. Over 22–105 the chain is Extracellular; that stretch reads FKIQVTEYED…CVELDSGTMA (84 aa). A disulfide bond links cysteine 37 and cysteine 73. N-linked (GlcNAc...) asparagine glycosylation is found at asparagine 38, asparagine 55, and asparagine 74. The helical transmembrane segment at 106–126 threads the bilayer; sequence GVIFIDLIATLLLALGVYCFA. At 127 to 173 the chain is on the cytoplasmic side; that stretch reads GHETGRPSGAAEVQALLKNEQLYQPLRDREDTQYSRLGGNWPRNKKS. An ITAM domain is found at 138–166; that stretch reads EVQALLKNEQLYQPLRDREDTQYSRLGGN. Residues tyrosine 149 and tyrosine 160 each carry the phosphotyrosine modification.

As to quaternary structure, the TCR-CD3 complex is composed of a CD3D/CD3E and a CD3G/CD3E heterodimers that preferentially associate with TCRalpha and TCRbeta, respectively, to form TCRalpha/CD3E/CD3G and TCRbeta/CD3G/CD3E trimers. In turn, the hexamer interacts with CD3Z homodimer to form the TCR-CD3 complex. Alternatively, TCRalpha and TCRbeta can be replaced by TCRgamma and TCRdelta. Interacts with coreceptors CD4 and CD8. In terms of processing, phosphorylated on Tyr residues after T-cell receptor triggering by LCK in association with CD4/CD8.

It is found in the membrane. Part of the TCR-CD3 complex present on T-lymphocyte cell surface that plays an essential role in adaptive immune response. When antigen presenting cells (APCs) activate T-cell receptor (TCR), TCR-mediated signals are transmitted across the cell membrane by the CD3 chains CD3D, CD3E, CD3G and CD3Z. All CD3 chains contain immunoreceptor tyrosine-based activation motifs (ITAMs) in their cytoplasmic domain. Upon TCR engagement, these motifs become phosphorylated by Src family protein tyrosine kinases LCK and FYN, resulting in the activation of downstream signaling pathways. In addition of this role of signal transduction in T-cell activation, CD3D plays an essential role in thymocyte differentiation. Indeed, participates in correct intracellular TCR-CD3 complex assembly and surface expression. In absence of a functional TCR-CD3 complex, thymocytes are unable to differentiate properly. Interacts with CD4 and CD8 and thus serves to establish a functional link between the TCR and coreceptors CD4 and CD8, which is needed for activation and positive selection of CD4 or CD8 T-cells. This chain is T-cell surface glycoprotein CD3 delta chain (Cd3d), found in Mus musculus (Mouse).